Reading from the N-terminus, the 512-residue chain is Annexin A7 (512 aa).

Residues 14–38 (GYPGGDPSYPPAAQQAFPGGQFPPA) are compositionally biased toward low complexity. Disordered stretches follow at residues 14–62 (GYPG…GYPH) and 146–190 (GGFS…AQPT). Positions 39–52 (AGGGAFPPASGGGN) are enriched in gly residues. Residues 164–182 (MPGQMPGQMPGQAPSGYPS) show a composition bias toward low complexity. Annexin repeat units lie at residues 209–279 (FDAL…ALFM), 280–351 (PSTY…SIMA), 364–436 (QQAE…AVLQ), and 440–511 (NRPL…AISG).

Belongs to the annexin family.

Its function is as follows. Calcium/phospholipid-binding protein which promotes membrane fusion and is involved in exocytosis. In Xenopus laevis (African clawed frog), this protein is Annexin A7 (anxa7).